Here is a 657-residue protein sequence, read N- to C-terminus: MAKETFYITTPIYYPSGNLHIGHAYSTVAGDVIARYKRMQGYDVRYLTGTDEHGQKIQEKAQKAGKTEIEYLDEMIAGIKQLWAKLEISNDDFIRTTEERHKHVVEQVFERLLKQGDIYLGEYEGWYSVPDETYYTESQLVDPQYENGKIIGGKSPDSGHEVELVKEESYFFNISKYTDRLLEFYDQNPDFIQPPSRKNEMINNFIKPGLADLAVSRTSFNWGVHVPSNPKHVVYVWIDALVNYISALGYLSDDESLFNKYWPADIHLMAKEIVRFHSIIWPILLMALDLPLPKKVFAHGWILMKDGKMSKSKGNVVDPNILIDRYGLDATRYYLMRELPFGSDGVFTPEAFVERTNFDLANDLGNLVNRTISMVNKYFDGELPAYQGPLHELDEEMEAMALETVKSYTESMESLQFSVALSTVWKFISRTNKYIDETTPWVLAKDDSQKDMLGNVMAHLVENIRYAAVLLRPFLTHAPKEIFEQLNINNPQFMEFSSLEQYGVLTESIMVTGQPKPIFPRLDSEAEIAYIKESMQPPATEEEKEEIPSKPQIDIKDFDKVEIKAATIINAEHVKKSDKLLKIQVDLDSEQRQIVSGIAKFYTPDDIIGKKVAVVTNLKPAKLMGQKSEGMILSAEKDGVLTLVSLPSAIPNGAVIK.

The short motif at 13–23 is the 'HIGH' region element; that stretch reads YYPSGNLHIGH. The short motif at 308-312 is the 'KMSKS' region element; sequence KMSKS. Lysine 311 serves as a coordination point for ATP. In terms of domain architecture, tRNA-binding spans 557-657; it reads DFDKVEIKAA…SAIPNGAVIK (101 aa).

Belongs to the class-I aminoacyl-tRNA synthetase family. MetG type 2B subfamily. Homodimer.

The protein resides in the cytoplasm. It catalyses the reaction tRNA(Met) + L-methionine + ATP = L-methionyl-tRNA(Met) + AMP + diphosphate. Functionally, is required not only for elongation of protein synthesis but also for the initiation of all mRNA translation through initiator tRNA(fMet) aminoacylation. This is Methionine--tRNA ligase from Staphylococcus aureus (strain MW2).